A 141-amino-acid chain; its full sequence is Nucleoside diphosphate kinase (141 aa).

The ATP site is built by K11, F59, R87, T93, R104, and N114. H117 (pros-phosphohistidine intermediate) is an active-site residue.

The protein belongs to the NDK family. As to quaternary structure, homotetramer. Mg(2+) serves as cofactor.

Its subcellular location is the cytoplasm. It carries out the reaction a 2'-deoxyribonucleoside 5'-diphosphate + ATP = a 2'-deoxyribonucleoside 5'-triphosphate + ADP. The enzyme catalyses a ribonucleoside 5'-diphosphate + ATP = a ribonucleoside 5'-triphosphate + ADP. In terms of biological role, major role in the synthesis of nucleoside triphosphates other than ATP. The ATP gamma phosphate is transferred to the NDP beta phosphate via a ping-pong mechanism, using a phosphorylated active-site intermediate. The sequence is that of Nucleoside diphosphate kinase from Legionella pneumophila (strain Lens).